The chain runs to 347 residues: Rhodopsin (347 aa).

The Extracellular portion of the chain corresponds to 1-33 (TEGPDFYIPMVNTTGVVRSPYEYPQYYLVNPAA). Asparagine 12 is a glycosylation site (N-linked (GlcNAc...) asparagine). A helical membrane pass occupies residues 34–58 (YAVLGAYMFFLIIVGFPINFLTLYV). The Cytoplasmic portion of the chain corresponds to 59-70 (TLEHKKLRTPLN). Residues 71 to 93 (YILLNLAVADLFMVIGGFTTTMY) traverse the membrane as a helical segment. Residues 94–107 (SSMHGYFVLGRLGC) lie on the Extracellular side of the membrane. The cysteines at positions 107 and 184 are disulfide-linked. The helical transmembrane segment at 108–130 (NIEGFFATLGGMISLWSLAVLAI) threads the bilayer. The short motif at 131–133 (ERW) is the 'Ionic lock' involved in activated form stabilization element. Over 131–149 (ERWVVVCKPISNFRFGENH) the chain is Cytoplasmic. A helical transmembrane segment spans residues 150-170 (AIMGVSLTWVMALACTVPPLV). The Extracellular portion of the chain corresponds to 171–199 (GWSRYIPEGMQCACGIDYYTRAEGYNNES). Asparagine 197 is a glycosylation site (N-linked (GlcNAc...) asparagine). A helical transmembrane segment spans residues 200-221 (FVIYMFTFHFLFPMFIIFFCYG). Residues 222–249 (RLLCAVKEAAAAQQESETTQRAEREVTR) are Cytoplasmic-facing. The chain crosses the membrane as a helical span at residues 250–271 (MVILMVIGYLVCWLPYASVAWF). Topologically, residues 272–283 (IFTHKGSEFGPL) are extracellular. The helical transmembrane segment at 284-305 (FMAVPSFFAKSSSIYNPIIYIC) threads the bilayer. At lysine 293 the chain carries N6-(retinylidene)lysine. At 306 to 347 (MNKQFRQCMITTLFCGKNPFEGQEEDSSTKTEASSASSVSPA) the chain is on the cytoplasmic side. Cysteine 320 is lipidated: S-palmitoyl cysteine. The interval 326 to 347 (EGQEEDSSTKTEASSASSVSPA) is disordered. A compositionally biased stretch (low complexity) spans 335 to 347 (KTEASSASSVSPA).

It belongs to the G-protein coupled receptor 1 family. Opsin subfamily. In terms of processing, phosphorylated on some or all of the serine and threonine residues present in the C-terminal region. Contains one covalently linked retinal chromophore.

Its subcellular location is the membrane. The protein resides in the cell projection. It is found in the cilium. The protein localises to the photoreceptor outer segment. Functionally, photoreceptor required for image-forming vision at low light intensity. While most salt water fish species use retinal as chromophore, most freshwater fish use 3-dehydroretinal, or a mixture of retinal and 3-dehydroretinal. Light-induced isomerization of 11-cis to all-trans retinal triggers a conformational change that activates signaling via G-proteins. Subsequent receptor phosphorylation mediates displacement of the bound G-protein alpha subunit by arrestin and terminates signaling. This Sargocentron spiniferum (Sabre squirrelfish) protein is Rhodopsin (rho).